The following is a 552-amino-acid chain: Putative transport protein HSM_0534 (552 aa).

Transmembrane regions (helical) follow at residues Ile4 to Trp24, Gly28 to Asn48, Leu67 to Leu87, Gly95 to Val115, and Met157 to Ile177. 2 consecutive RCK C-terminal domains span residues Lys190–Glu275 and Ile277–Asn360. The next 6 membrane-spanning stretches (helical) occupy residues Met370–Ile390, Ala402–Phe424, Ile438–Val458, Leu463–Ile483, Leu495–Ile515, and Val529–Trp549.

It belongs to the AAE transporter (TC 2.A.81) family. YidE subfamily.

The protein resides in the cell membrane. This is Putative transport protein HSM_0534 from Histophilus somni (strain 2336) (Haemophilus somnus).